The chain runs to 104 residues: uncharacterized protein (104 aa).

This is an uncharacterized protein from Orgyia pseudotsugata (Douglas-fir tussock moth).